The following is a 239-amino-acid chain: Large ribosomal subunit protein uL1 (239 aa).

This sequence belongs to the universal ribosomal protein uL1 family. In terms of assembly, part of the 50S ribosomal subunit.

Functionally, binds directly to 23S rRNA. The L1 stalk is quite mobile in the ribosome, and is involved in E site tRNA release. In terms of biological role, protein L1 is also a translational repressor protein, it controls the translation of the L11 operon by binding to its mRNA. The sequence is that of Large ribosomal subunit protein uL1 from Rhodococcus erythropolis (strain PR4 / NBRC 100887).